The following is a 177-amino-acid chain: LOB domain-containing protein 33 (177 aa).

Residues 6–108 enclose the LOB domain; sequence SSCGACKFLR…EEIEFLGSQM (103 aa).

Belongs to the LOB domain-containing protein family. As to expression, expressed in roots.

The polypeptide is LOB domain-containing protein 33 (LBD33) (Arabidopsis thaliana (Mouse-ear cress)).